The chain runs to 227 residues: Phosphoribosylformylglycinamidine synthase subunit PurQ (227 aa).

Residues 3–227 (SSVITFPGSN…FFQNLINNLK (225 aa)) form the Glutamine amidotransferase type-1 domain. The active-site Nucleophile is cysteine 85. Active-site residues include histidine 201 and glutamate 203.

As to quaternary structure, part of the FGAM synthase complex composed of 1 PurL, 1 PurQ and 2 PurS subunits.

Its subcellular location is the cytoplasm. The catalysed reaction is N(2)-formyl-N(1)-(5-phospho-beta-D-ribosyl)glycinamide + L-glutamine + ATP + H2O = 2-formamido-N(1)-(5-O-phospho-beta-D-ribosyl)acetamidine + L-glutamate + ADP + phosphate + H(+). It carries out the reaction L-glutamine + H2O = L-glutamate + NH4(+). Its pathway is purine metabolism; IMP biosynthesis via de novo pathway; 5-amino-1-(5-phospho-D-ribosyl)imidazole from N(2)-formyl-N(1)-(5-phospho-D-ribosyl)glycinamide: step 1/2. Part of the phosphoribosylformylglycinamidine synthase complex involved in the purines biosynthetic pathway. Catalyzes the ATP-dependent conversion of formylglycinamide ribonucleotide (FGAR) and glutamine to yield formylglycinamidine ribonucleotide (FGAM) and glutamate. The FGAM synthase complex is composed of three subunits. PurQ produces an ammonia molecule by converting glutamine to glutamate. PurL transfers the ammonia molecule to FGAR to form FGAM in an ATP-dependent manner. PurS interacts with PurQ and PurL and is thought to assist in the transfer of the ammonia molecule from PurQ to PurL. This Pelagibacter ubique (strain HTCC1062) protein is Phosphoribosylformylglycinamidine synthase subunit PurQ.